Consider the following 567-residue polypeptide: Urease subunit alpha (567 aa).

The 439-residue stretch at 129–567 (GGIDAHIHFI…LPLTQRYCLF (439 aa)) folds into the Urease domain. 3 residues coordinate Ni(2+): histidine 134, histidine 136, and lysine 217. N6-carboxylysine is present on lysine 217. Position 219 (histidine 219) interacts with substrate. Ni(2+) is bound by residues histidine 246 and histidine 272. Histidine 320 (proton donor) is an active-site residue. Position 360 (aspartate 360) interacts with Ni(2+).

Belongs to the metallo-dependent hydrolases superfamily. Urease alpha subunit family. Heterotrimer of UreA (gamma), UreB (beta) and UreC (alpha) subunits. Three heterotrimers associate to form the active enzyme. Ni cation is required as a cofactor. Carboxylation allows a single lysine to coordinate two nickel ions.

Its subcellular location is the cytoplasm. The catalysed reaction is urea + 2 H2O + H(+) = hydrogencarbonate + 2 NH4(+). It participates in nitrogen metabolism; urea degradation; CO(2) and NH(3) from urea (urease route): step 1/1. The chain is Urease subunit alpha from Psychromonas ingrahamii (strain DSM 17664 / CCUG 51855 / 37).